We begin with the raw amino-acid sequence, 308 residues long: Pseudouridine-5'-phosphate glycosidase (308 aa).

E29 acts as the Proton donor in catalysis. Substrate-binding residues include K90 and V110. D142 provides a ligand contact to Mn(2+). A substrate-binding site is contributed by 144 to 146 (SSD). K163 serves as the catalytic Nucleophile.

Belongs to the pseudouridine-5'-phosphate glycosidase family. As to quaternary structure, homotrimer. The cofactor is Mn(2+).

The enzyme catalyses D-ribose 5-phosphate + uracil = psi-UMP + H2O. Catalyzes the reversible cleavage of pseudouridine 5'-phosphate (PsiMP) to ribose 5-phosphate and uracil. Functions biologically in the cleavage direction, as part of a pseudouridine degradation pathway. This is Pseudouridine-5'-phosphate glycosidase from Serratia proteamaculans (strain 568).